The following is a 215-amino-acid chain: Cytochrome b6 (215 aa).

Residues 32 to 52 (IFYCLGGITLTCFLVQVATGF) traverse the membrane as a helical segment. A heme c-binding site is contributed by C35. Heme b is bound by residues H86 and H100. The next 3 helical transmembrane spans lie at 90 to 110 (ASMM…TGGF), 116 to 136 (LTWV…VTGY), and 186 to 206 (LHTF…FPMI). H187 and H202 together coordinate heme b.

Belongs to the cytochrome b family. PetB subfamily. The 4 large subunits of the cytochrome b6-f complex are cytochrome b6, subunit IV (17 kDa polypeptide, PetD), cytochrome f and the Rieske protein, while the 4 small subunits are PetG, PetL, PetM and PetN. The complex functions as a dimer. Heme b serves as cofactor. It depends on heme c as a cofactor.

The protein localises to the plastid. Its subcellular location is the chloroplast thylakoid membrane. Its function is as follows. Component of the cytochrome b6-f complex, which mediates electron transfer between photosystem II (PSII) and photosystem I (PSI), cyclic electron flow around PSI, and state transitions. This chain is Cytochrome b6, found in Vitis vinifera (Grape).